The chain runs to 105 residues: Heat shock protein HspQ (105 aa).

This sequence belongs to the HspQ family.

It is found in the cytoplasm. Functionally, involved in the degradation of certain denaturated proteins, including DnaA, during heat shock stress. The protein is Heat shock protein HspQ of Salmonella choleraesuis (strain SC-B67).